A 641-amino-acid chain; its full sequence is MNIRSNPDTTRPAVTTGALPSSQKIYVTPDAAPDLRVPLREIILSKEAAEPNLPVYDTTGPYTDPAITIDVNAGLKRPRTQWVLERGGVEQYQGREIKPIDNGNVSGEHAAAAFKAYHQPLRGVGDSPITQYEFARKGIITKEMIYVATRENLGRKQQLERAEAALADGESFGAAIPAFITPEFVRDEIARGRAIIPANINHGELEPMIIGRNFLTKINANIGNSAVTSSVEEEVDKMVWAIRWGADTVMDLSTGRNIHTTREWILRNAPIPIGTVPIYQALEKCDGDPVKLTWELYKDTLIEQCEQGVDYFTIHAGVRLAYIHLTANRVTGIVSRGGSIMAKWCLAHHQESFLYTHFDEICDLMRKYDVSFSLGDGLRPGSIADANDRAQFAELETLGELTKIAWDKGCQVMIEGPGHVPLHKIKINMDKQLKECGEAPFYTLGPLTTDIAPGYDHITSGIGAAMIGWFGCAMLCYVTPKEHLGLPDRNDVKVGVITYKIAAHASDLAKGHPAAQLRDDAVSRARFDFRWQDQFNLGLDPDTAKAFHDETLPKDAHKVAHFCSMCGPKFCSMKITQDVRDYAAGLGDNEKAALYPAGHVGMTISGVIEDGMAQMSAKFRDMGEELYLDAEKVKESNRALS.

Substrate contacts are provided by residues asparagine 221, methionine 250, tyrosine 279, histidine 315, 335–337, 376–379, and glutamate 415; these read SRG and DGLR. Residue histidine 419 coordinates Zn(2+). Tyrosine 442 is a binding site for substrate. Histidine 483 contacts Zn(2+). Residues cysteine 563, cysteine 566, and cysteine 571 each contribute to the [4Fe-4S] cluster site.

It belongs to the ThiC family. Homodimer. The cofactor is [4Fe-4S] cluster.

It carries out the reaction 5-amino-1-(5-phospho-beta-D-ribosyl)imidazole + S-adenosyl-L-methionine = 4-amino-2-methyl-5-(phosphooxymethyl)pyrimidine + CO + 5'-deoxyadenosine + formate + L-methionine + 3 H(+). The protein operates within cofactor biosynthesis; thiamine diphosphate biosynthesis. Its function is as follows. Catalyzes the synthesis of the hydroxymethylpyrimidine phosphate (HMP-P) moiety of thiamine from aminoimidazole ribotide (AIR) in a radical S-adenosyl-L-methionine (SAM)-dependent reaction. In Rhodopseudomonas palustris (strain BisA53), this protein is Phosphomethylpyrimidine synthase.